The following is a 321-amino-acid chain: Ferredoxin--NADP reductase (321 aa).

The FAD site is built by aspartate 28, glutamine 36, tyrosine 41, alanine 81, phenylalanine 115, aspartate 274, and serine 315.

The protein belongs to the ferredoxin--NADP reductase type 2 family. As to quaternary structure, homodimer. Requires FAD as cofactor.

It catalyses the reaction 2 reduced [2Fe-2S]-[ferredoxin] + NADP(+) + H(+) = 2 oxidized [2Fe-2S]-[ferredoxin] + NADPH. The chain is Ferredoxin--NADP reductase from Frankia casuarinae (strain DSM 45818 / CECT 9043 / HFP020203 / CcI3).